Here is a 647-residue protein sequence, read N- to C-terminus: Exoribonuclease 2 (647 aa).

Positions 190–519 (REDLTSLPFV…NHRLLKAIIK (330 aa)) constitute an RNB domain. Positions 564–646 (EQRFSAEVID…ETRSIVARPV (83 aa)) constitute an S1 motif domain.

This sequence belongs to the RNR ribonuclease family. RNase II subfamily.

It localises to the cytoplasm. It carries out the reaction Exonucleolytic cleavage in the 3'- to 5'-direction to yield nucleoside 5'-phosphates.. Functionally, involved in mRNA degradation. Hydrolyzes single-stranded polyribonucleotides processively in the 3' to 5' direction. This is Exoribonuclease 2 from Erwinia tasmaniensis (strain DSM 17950 / CFBP 7177 / CIP 109463 / NCPPB 4357 / Et1/99).